A 55-amino-acid chain; its full sequence is Large ribosomal subunit protein bL33B (55 aa).

This sequence belongs to the bacterial ribosomal protein bL33 family.

The sequence is that of Large ribosomal subunit protein bL33B from Salinispora tropica (strain ATCC BAA-916 / DSM 44818 / JCM 13857 / NBRC 105044 / CNB-440).